The following is a 200-amino-acid chain: Transcription factor FapR (200 aa).

It belongs to the FapR family.

Functionally, transcriptional factor involved in regulation of membrane lipid biosynthesis by repressing genes involved in fatty acid and phospholipid metabolism. The sequence is that of Transcription factor FapR from Caldanaerobacter subterraneus subsp. tengcongensis (strain DSM 15242 / JCM 11007 / NBRC 100824 / MB4) (Thermoanaerobacter tengcongensis).